A 357-amino-acid chain; its full sequence is GTPase Obg (357 aa).

An Obg domain is found at 1-158; sequence MFVDNIKLKV…LEIVLELKLI (158 aa). The OBG-type G domain maps to 159–345; the sequence is ADVGLVGFPN…LKFALFDLVE (187 aa). Residues 165-172, 190-194, 212-215, 280-283, and 326-328 contribute to the GTP site; these read GFPNAGKS, FTTLT, DIPG, TKCD, and SSV. Residues Ser-172 and Thr-192 each contribute to the Mg(2+) site.

It belongs to the TRAFAC class OBG-HflX-like GTPase superfamily. OBG GTPase family. As to quaternary structure, monomer. Requires Mg(2+) as cofactor.

It is found in the cytoplasm. Functionally, an essential GTPase which binds GTP, GDP and possibly (p)ppGpp with moderate affinity, with high nucleotide exchange rates and a fairly low GTP hydrolysis rate. Plays a role in control of the cell cycle, stress response, ribosome biogenesis and in those bacteria that undergo differentiation, in morphogenesis control. This Nautilia profundicola (strain ATCC BAA-1463 / DSM 18972 / AmH) protein is GTPase Obg.